The primary structure comprises 461 residues: Cysteine--tRNA ligase (461 aa).

Cys-27 is a Zn(2+) binding site. The short motif at 29-39 is the 'HIGH' region element; sequence ITVYDYCHIGH. Zn(2+)-binding residues include Cys-208, His-233, and Glu-237. The 'KMSKS' region motif lies at 265-269; that stretch reads KMSKS. Position 268 (Lys-268) interacts with ATP.

It belongs to the class-I aminoacyl-tRNA synthetase family. Monomer. The cofactor is Zn(2+).

It is found in the cytoplasm. The enzyme catalyses tRNA(Cys) + L-cysteine + ATP = L-cysteinyl-tRNA(Cys) + AMP + diphosphate. This is Cysteine--tRNA ligase from Chromohalobacter salexigens (strain ATCC BAA-138 / DSM 3043 / CIP 106854 / NCIMB 13768 / 1H11).